Here is a 457-residue protein sequence, read N- to C-terminus: G-protein coupled receptor 135 (457 aa).

The disordered stretch occupies residues 1–26 (MEEQARPPGRPAASATLQGSAHPGGA). Residues 1 to 64 (MEEQARPPGR…EAAGSRGPAP (64 aa)) are Extracellular-facing. The N-linked (GlcNAc...) asparagine glycan is linked to Asn-47. A helical transmembrane segment spans residues 65–85 (LLWHGAAVAAQALVLLLIFLL). Topologically, residues 86–109 (SSLGNCAVMGVIVKHRQLRTVTNA) are cytoplasmic. The chain crosses the membrane as a helical span at residues 110-130 (FILSLSLSDLLTALLCLPAAF). At 131–156 (LDLFAPPGDSGPWRSFCAASRFFSSC) the chain is on the extracellular side. The chain crosses the membrane as a helical span at residues 157 to 177 (FGIVSTFSVALISLDRYCAIV). Residues 178 to 189 (RPPRDKLGRRRA) lie on the Cytoplasmic side of the membrane. The chain crosses the membrane as a helical span at residues 190–210 (LQLLAGAWLAALGFSLPWDLL). Topologically, residues 211-235 (RAPREPPAPQSFHRCLYRTSPDPAQ) are extracellular. The chain crosses the membrane as a helical span at residues 236–256 (LGVAYSVGLVVACYLLPFLLM). Topologically, residues 257–295 (CFCRYHICKTVRLSDVRVRPMTTYARVLRFFSEVRTATT) are cytoplasmic. A helical membrane pass occupies residues 296-316 (VLIMIIFVMCCWGPYCFLVLL). Residues 317–329 (AATRQGQATQAPS) lie on the Extracellular side of the membrane. A helical membrane pass occupies residues 330-350 (LLNVAAVWLTWANGAINPVIY). The Cytoplasmic portion of the chain corresponds to 351 to 457 (AIRNPNISML…HNSETRDSSI (107 aa)).

The protein belongs to the G-protein coupled receptor 1 family. As to quaternary structure, interacts with MTNR1B. Interacts with ARRB1 and ARRB2 in a spontaneous and agonist-independent manner; leading to the internalization of GPR135 in the endosomal compartment.

Its subcellular location is the cell membrane. The protein resides in the endosome membrane. Orphan receptor. Has spontaneous activity for beta-arrestin recruitment. Shows a reciprocal regulatory interaction with the melatonin receptor MTNR1B most likely through receptor heteromerization. The sequence is that of G-protein coupled receptor 135 (Gpr135) from Mus musculus (Mouse).